The following is a 142-amino-acid chain: Hemoglobin cathodic subunit alpha (142 aa).

N-acetylserine is present on serine 1. The 142-residue stretch at 1–142 folds into the Globin domain; sequence SLTAKDKALV…LSSTAADKYR (142 aa). An O2-binding site is contributed by histidine 59. Residue histidine 88 coordinates heme b.

This sequence belongs to the globin family. Heterotetramer of two alpha chains and two beta chains.

Functionally, involved in oxygen transport from gills to the various peripheral tissues. The sequence is that of Hemoglobin cathodic subunit alpha from Hoplosternum littorale (Hassar).